The primary structure comprises 663 residues: Transmembrane 9 superfamily member 2 (663 aa).

Positions 1–28 (MSARLPVLSPPRWPRLLLLSLLLLGAVP) are cleaved as a signal peptide. Residues 29–300 (GPRRSGGFYL…LESMPHTHIQ (272 aa)) lie on the Lumenal side of the membrane. Residues 301–321 (WFSIMNSLVIVLFLSGMVAMI) traverse the membrane as a helical segment. Topologically, residues 322-374 (MLRTLHKDIARYNQMDSTEDAQEEFGWKLVHGDIFRPPRKGMLLSVFLGSGTQ) are cytoplasmic. Residues 375–395 (ILIMTFVTLFFACLGFLSPAN) form a helical membrane-spanning segment. Over 396–398 (RGA) the chain is Lumenal. A helical transmembrane segment spans residues 399-419 (LMTCAVVLWVLLGTPAGYVAA). At 420–437 (RFYKSFGGEKWKTNVLLT) the chain is on the cytoplasmic side. A helical membrane pass occupies residues 438–458 (SFLCPGIVFADFFIMNLILWG). The Lumenal segment spans residues 459-466 (EGSSAAIP). The helical transmembrane segment at 467-487 (FGTLVAILALWFCISVPLTFI) threads the bilayer. Topologically, residues 488-522 (GAYFGFKKNAIEHPVRTNQIPRQIPEQSFYTKPLP) are cytoplasmic. Residues 523–543 (GIIMGGILPFGCIFIQLFFIL) traverse the membrane as a helical segment. Over 544–554 (NSIWSHQMYYM) the chain is Lumenal. The helical transmembrane segment at 555 to 575 (FGFLFLVFIILVITCSEATIL) threads the bilayer. Residues 576-591 (LCYFHLCAEDYHWQWR) are Cytoplasmic-facing. A helical membrane pass occupies residues 592–612 (SFLTSGFTAVYFLIYAVHYFF). Topologically, residues 613–631 (SKLQITGTASTILYFGYTM) are lumenal. A helical transmembrane segment spans residues 632-652 (IMVLIFFLFTGTIGFFACFWF). Topologically, residues 653–663 (VTKIYSVVKVD) are cytoplasmic.

Belongs to the nonaspanin (TM9SF) (TC 9.A.2) family.

It localises to the endosome membrane. It is found in the golgi outpost. Its subcellular location is the cytoplasm. The protein resides in the cytoskeleton. The protein localises to the microtubule organizing center. In terms of biological role, in the intracellular compartments, may function as a channel or small molecule transporter. This is Transmembrane 9 superfamily member 2 (TM9SF2) from Pongo abelii (Sumatran orangutan).